Consider the following 328-residue polypeptide: NADH:quinone reductase (328 aa).

FMN contacts are provided by residues 22–24 (GMQ), threonine 75, lysine 124, alanine 150, 178–180 (SGG), and 201–202 (GT).

Belongs to the nitronate monooxygenase family. In terms of assembly, monomer. The cofactor is FMN.

The catalysed reaction is a quinone + NADH + H(+) = a quinol + NAD(+). Catalyzes the NADH-dependent reduction of a broad spectrum of quinone substrates, generating the corresponding hydroquinones. Highly prefers NADH to NADPH as a reducing substrate. Also displays a small NADH oxidase activity. Does not exhibit nitronate monooxygenase activity; is inactive against propionate 3-nitronate, 3-nitropropionate, nitroethane, 1-nitropropane, 2-nitropropane, and the anionic forms ethylnitronate, propyl-1-nitronate, and propyl-2-nitronate. Has no azoreductase activity since it is not able to reduce the azo dye methyl red with NADH. May be required to maintain an appropriate [NAD(+)]/[NADH] ratio for the catabolism of fatty acids in P.aeruginosa PAO1. This is NADH:quinone reductase from Pseudomonas aeruginosa (strain ATCC 15692 / DSM 22644 / CIP 104116 / JCM 14847 / LMG 12228 / 1C / PRS 101 / PAO1).